We begin with the raw amino-acid sequence, 487 residues long: Cytochrome c-552 (487 aa).

The signal sequence occupies residues 1–27 (MSKKWTRNTAAMAAILSALCLSTNALA). Residue His104 participates in heme c binding. Heme contacts are provided by Cys132, Cys135, and Lys136. The heme c site is built by Cys170, Cys173, His174, Cys219, Cys222, and His223. 4 residues coordinate Ca(2+): Glu225, Tyr226, Lys271, and Gln273. Tyr226 is a substrate binding site. Residue His274 participates in substrate binding. The heme c site is built by His285, Cys292, Cys295, His296, His311, Cys324, Cys327, His328, and His403.

Belongs to the cytochrome c-552 family. Requires Ca(2+) as cofactor. Heme c serves as cofactor.

The protein localises to the periplasm. It catalyses the reaction 6 Fe(III)-[cytochrome c] + NH4(+) + 2 H2O = 6 Fe(II)-[cytochrome c] + nitrite + 8 H(+). Its pathway is nitrogen metabolism; nitrate reduction (assimilation). Its function is as follows. Catalyzes the reduction of nitrite to ammonia, consuming six electrons in the process. The polypeptide is Cytochrome c-552 (Photobacterium profundum (strain SS9)).